Consider the following 947-residue polypeptide: Zinc finger CCCH domain-containing protein 18 (947 aa).

Met-1 carries the N-acetylmethionine modification. Disordered stretches follow at residues 1–218 (MDVA…PRPT), 275–295 (GGPV…TESA), and 387–921 (YTEA…TLSR). Phosphoserine occurs at positions 6, 32, 44, 57, 63, 70, 74, 79, and 91. Residues 73-85 (KSQDQDSEAHELS) are compositionally biased toward basic and acidic residues. Over residues 94–104 (EEGDDAEEDGT) the composition is skewed to acidic residues. Position 104 is a phosphothreonine (Thr-104). Phosphoserine is present on residues Ser-105 and Ser-113. The segment covering 105–119 (SDLRDEASSVTRELD) has biased composition (basic and acidic residues). Acidic residues-rich tracts occupy residues 120-131 (EHELDYDEEVPE) and 138-153 (QEEE…EEEK). Over residues 160 to 185 (EEGKPDVQSVGEKEPTEAAKEKKKED) the composition is skewed to basic and acidic residues. Ser-168 carries the post-translational modification Phosphoserine. Residues 186–202 (DDGEIDDGEIDDDDLEE) show a composition bias toward acidic residues. Over residues 203–212 (GEVKDPSDRK) the composition is skewed to basic and acidic residues. The segment at 214-240 (RPRPTCRFFMKGNCTWGMNCRFIHPGV) adopts a C3H1-type zinc-finger fold. Basic and acidic residues predominate over residues 391–479 (EPYHNYRDRE…DRDKDKEKPK (89 aa)). At Ser-482 the chain carries Phosphoserine. A Glycyl lysine isopeptide (Lys-Gly) (interchain with G-Cter in SUMO2) cross-link involves residue Lys-505. Positions 505–515 (KRADEWKDPWR) are enriched in basic and acidic residues. Residues Ser-527, Ser-529, and Ser-531 each carry the phosphoserine modification. The span at 540–601 (SASSASASNS…SRSRSFSSSP (62 aa)) shows a compositional bias: low complexity. Residues 602–611 (SPSPTPSPHR) show a composition bias toward pro residues. Residues Lys-617 and Lys-656 each participate in a glycyl lysine isopeptide (Lys-Gly) (interchain with G-Cter in SUMO2) cross-link. Basic and acidic residues predominate over residues 656-665 (KPGDLREARR). 2 stretches are compositionally biased toward low complexity: residues 687 to 720 (GSSY…SVHS) and 731 to 745 (ASPV…PTPA). Basic and acidic residues predominate over residues 755-769 (KKEDGVREEKRKRDP). Low complexity predominate over residues 773–804 (PPKSSKAPAGGKASQQAAAPQQAAPGQPQQGS). N6-acetyllysine is present on Lys-809. Lys-812 participates in a covalent cross-link: Glycyl lysine isopeptide (Lys-Gly) (interchain with G-Cter in SUMO2). Over residues 819–836 (AAEKGSRKRYEPSDKDRQ) the composition is skewed to basic and acidic residues. Phosphoserine is present on residues Ser-837, Ser-846, Ser-862, Ser-887, and Ser-890. Residues 887–918 (SPQSKSSSKVTSVPGKATDTATAGTKSGKAST) are compositionally biased toward low complexity. Lys-902 is covalently cross-linked (Glycyl lysine isopeptide (Lys-Gly) (interchain with G-Cter in SUMO2)). A coiled-coil region spans residues 915–944 (KASTLSRREELLKQLKAVEDAIARKRAKIP).

In terms of assembly, interacts with ZFC3H1 in a RNase-insensitive manner.

The protein localises to the nucleus. The sequence is that of Zinc finger CCCH domain-containing protein 18 (Zc3h18) from Rattus norvegicus (Rat).